We begin with the raw amino-acid sequence, 110 residues long: Large ribosomal subunit protein uL22 (110 aa).

Residues 85–95 (RGTASKIRKPT) show a composition bias toward basic residues. The interval 85 to 110 (RGTASKIRKPTSHVMVEVSKAQKKEA) is disordered.

The protein belongs to the universal ribosomal protein uL22 family. Part of the 50S ribosomal subunit.

In terms of biological role, this protein binds specifically to 23S rRNA; its binding is stimulated by other ribosomal proteins, e.g. L4, L17, and L20. It is important during the early stages of 50S assembly. It makes multiple contacts with different domains of the 23S rRNA in the assembled 50S subunit and ribosome. Functionally, the globular domain of the protein is located near the polypeptide exit tunnel on the outside of the subunit, while an extended beta-hairpin is found that lines the wall of the exit tunnel in the center of the 70S ribosome. In Campylobacter curvus (strain 525.92), this protein is Large ribosomal subunit protein uL22.